Here is a 451-residue protein sequence, read N- to C-terminus: MQAWEEFLKAQEVELGLETVQKWLRTLKIQRFDACNLYLEAKDSFQALWFEEHIRNKAQQKFINGNNKRIKIHLSVANTPQRAKKTKTANKEKDFKAPFELTFDELDPLCLFPYFISTEENLLSHQLLLEIAGLSPQIHSTQLGTFNPIYLYGSGGSGKTHLLMSLAHALKAQGLKVIYVRAETFTDHVVTAIRAGEMSVFRQAYRNIDVLLVDDVHVFSRKGATQEEFFHTFNTLHLEGKQIILASECSPQDLQLIEPRLVSRFEWGIVLPLKPLRPGEMRNLLIAKAKALHFELPLKIADYLIETFKSNAKALIKGLEALVLRLHLDAKHSITALSVTATKALLIDLIEEEQKTAITPQKIIQAVAEQYGIRTEDILGKAQTRECALPRQLAMHLCREQLKMPFMKIGDLFSRDHSTVMSSVKSIQKSLEQDDREISGICHIILKKLQG.

The segment at 1-68 (MQAWEEFLKA…QQKFINGNNK (68 aa)) is domain I, interacts with DnaA modulators. Residues 68 to 104 (KRIKIHLSVANTPQRAKKTKTANKEKDFKAPFELTFD) are domain II. Residues 105-326 (ELDPLCLFPY…KGLEALVLRL (222 aa)) are domain III, AAA+ region. The ATP site is built by glycine 156, glycine 158, lysine 159, and threonine 160. The segment at 327–451 (HLDAKHSITA…CHIILKKLQG (125 aa)) is domain IV, binds dsDNA.

The protein belongs to the DnaA family. Oligomerizes as a right-handed, spiral filament on DNA at oriC.

It localises to the cytoplasm. Its function is as follows. Plays an essential role in the initiation and regulation of chromosomal replication. ATP-DnaA binds to the origin of replication (oriC) to initiate formation of the DNA replication initiation complex once per cell cycle. Binds the DnaA box (a 9 base pair repeat at the origin) and separates the double-stranded (ds)DNA. Forms a right-handed helical filament on oriC DNA; dsDNA binds to the exterior of the filament while single-stranded (ss)DNA is stabiized in the filament's interior. The ATP-DnaA-oriC complex binds and stabilizes one strand of the AT-rich DNA unwinding element (DUE), permitting loading of DNA polymerase. After initiation quickly degrades to an ADP-DnaA complex that is not apt for DNA replication. Binds acidic phospholipids. This chain is Chromosomal replication initiator protein DnaA 2, found in Protochlamydia amoebophila (strain UWE25).